We begin with the raw amino-acid sequence, 317 residues long: Olfactory receptor 5AP2 (317 aa).

Residues 1-32 are Extracellular-facing; sequence MVRSGKGIQNKNATEVTEFILLGLSDNPDLQG. N12 carries an N-linked (GlcNAc...) asparagine glycan. The helical transmembrane segment at 33–53 threads the bilayer; sequence VLFALFLIIYTMTLVGNLGMM. Topologically, residues 54 to 61 are cytoplasmic; that stretch reads ALIKIDRS. The chain crosses the membrane as a helical span at residues 62–82; it reads LHTPMYFFLSSLSFVDASYSS. Residues 83 to 106 are Extracellular-facing; the sequence is SVTPKMLVNLMAEDKSISFNGCAT. C104 and C196 are oxidised to a cystine. A helical transmembrane segment spans residues 107–127; sequence QFFFFGSFLGTECFLLAMMAY. The Cytoplasmic portion of the chain corresponds to 128–140; sequence DRYAAIWNPLLYP. The chain crosses the membrane as a helical span at residues 141-161; the sequence is VLMSGRICFMLVSTSFLAGFG. Over 162 to 203 the chain is Extracellular; it reads NAAIHTGMTFRLSFCGSNKINHFYCDTPPLLKLSCSDTHING. A helical transmembrane segment spans residues 204–224; the sequence is IVIMAFSSFNVISCVLIVLIS. Residues 225–244 lie on the Cytoplasmic side of the membrane; that stretch reads YLCILIAILKMPSAEGRHKA. A helical transmembrane segment spans residues 245-265; sequence FSTCASHLMAVTIFFGTILFM. Topologically, residues 266–278 are extracellular; the sequence is YLRPTSSYSMEQD. A helical transmembrane segment spans residues 279-299; sequence KVVSVFYTVVIPMLNPLIYSL. Residues 300–317 lie on the Cytoplasmic side of the membrane; it reads KNKDVKKAVKKILHNYVV.

It belongs to the G-protein coupled receptor 1 family.

Its subcellular location is the cell membrane. Functionally, odorant receptor. The chain is Olfactory receptor 5AP2 from Mus musculus (Mouse).